We begin with the raw amino-acid sequence, 416 residues long: Na(+)/H(+) antiporter NhaA (416 aa).

The next 9 helical transmembrane spans lie at 18–38 (VGGA…NSPW), 59–79 (LTLA…VAGL), 97–117 (ALPI…AAVI), 127–147 (GWAI…ALTG), 167–187 (LLAI…LWLL), 265–285 (GICV…ATVF), 297–317 (VMLG…WVAI), 333–353 (MFAL…VAEL), and 363–383 (LAKA…SALL). A disordered region spans residues 396 to 416 (ALELQPDEGDASDPSEGGSLR).

The protein belongs to the NhaA Na(+)/H(+) (TC 2.A.33) antiporter family.

Its subcellular location is the cell membrane. It carries out the reaction Na(+)(in) + 2 H(+)(out) = Na(+)(out) + 2 H(+)(in). In terms of biological role, na(+)/H(+) antiporter that extrudes sodium in exchange for external protons. This Nocardia farcinica (strain IFM 10152) protein is Na(+)/H(+) antiporter NhaA.